The primary structure comprises 148 residues: Transcriptional regulator MraZ (148 aa).

2 consecutive SpoVT-AbrB domains span residues 5-51 (AAAL…PSPA) and 80-123 (ARTE…SEAG).

This sequence belongs to the MraZ family. Forms oligomers.

The protein localises to the cytoplasm. It localises to the nucleoid. The polypeptide is Transcriptional regulator MraZ (Dechloromonas aromatica (strain RCB)).